We begin with the raw amino-acid sequence, 1121 residues long: MSQTLLDSLNQKELTETSCTIEIQAAFILSSLATFFGGLIILFLFRIALKSSRSWKYVKGPRGLLELFSSRRIEANPLRKLYFHGVFRQRIEMLLSAQTVVGQVLVILVFVLSIGSLVIYFINSMDPVRRCSSYEDKIVHVDLSFNAFFSFYFGLRFWAAEDKIKFWLEMNSIVDIFTIPPTFISYYLKSNWLGLRFLRALRLLELPKILQILQVIKTSNSVKLSKLLSIVISTWFTAAGFLHLVENSGDPWLNGRNSQTMSYFESIYLVTATMSTVGFGDVVAKTSLGRIFIVFFTLGSLILFANYIPEMVELFSTRKKYTKPYEAVKGKKFIVVCGNITVDSVTAFLRNFLHWKSGEINIEIVFLGETLPCLELETLLKCHTSCTNFVCGTALKFEDLKRVAVENSEACLILANHFCSDLHDEDNSNIMRVLSIKNYYPQTRVIIQILQSQNKVFLSKIPNWDWSAGDNILCFAELKLGFIAQGCLVPGLCTFLTTLFIEQNQKVFPKHPWQKHFLNGLKNKILTQRLSNDFVGMTFPQVSRLCFVKLNLMLIAIQHKPFFHSCCTLILNPSSQVRLNKDTLGFFIADSSKAVKRAFFYCSNCHSDVCNPELIGKCNCKIKSRQQLIAPTIMVMKSSLTDFTTSSHIHASMSTEIHTCFSREQPSLITITTNRPTTNDTVDDTDMLDSSGMFHWCRAMPLDKVVLKRSEKAKHEFQNHIVVCVFGDAQCTLVGLRNFVMPLRASNYTRQELKDIVFIGSLEYFQREWRFLRNFPKIHIMPGSALYMGDLIAVNVEQCSMCVILATPYKALSSQILVDTEAIMATLNIQSLRITSPTPGSSKSEVKPSSAFDSKERKQRYKQIPILTELKNPSNIHFIEQMGGLDGMLKGTSLHLSTSFSTGAVFSDTFLDSLLATSFYNYHVVELLQMLVTGGISSEMEHYLVKEKPYKTTDDYEAIKSGRTRCKLGLLSLDQTVLSGINPRKTFGQLFCGSLDNFGILCVGLYRMIDEEEPSQEHKRFVITRPSNECHLLPSDLVFCAIPFNTTCGKSDSSPSIQAQNNSTNATTPLAQGSNFFDSHHADESHDLYPVDDTGERWSQHHHSRVYPLDTLDASDIVQEK.

Residues 1–24 (MSQTLLDSLNQKELTETSCTIEIQ) are Extracellular-facing. The helical transmembrane segment at 25-45 (AAFILSSLATFFGGLIILFLF) threads the bilayer. At 46-101 (RIALKSSRSWKYVKGPRGLLELFSSRRIEANPLRKLYFHGVFRQRIEMLLSAQTVV) the chain is on the cytoplasmic side. A helical membrane pass occupies residues 102-122 (GQVLVILVFVLSIGSLVIYFI). The Extracellular segment spans residues 123-137 (NSMDPVRRCSSYEDK). The helical transmembrane segment at 138–158 (IVHVDLSFNAFFSFYFGLRFW) threads the bilayer. The Cytoplasmic segment spans residues 159 to 165 (AAEDKIK). Residues 166–186 (FWLEMNSIVDIFTIPPTFISY) form a helical membrane-spanning segment. Residues 187–188 (YL) are Extracellular-facing. Residues 189–209 (KSNWLGLRFLRALRLLELPKI) form a helical; Voltage-sensor membrane-spanning segment. Residues 210–226 (LQILQVIKTSNSVKLSK) are Cytoplasmic-facing. A helical transmembrane segment spans residues 227 to 247 (LLSIVISTWFTAAGFLHLVEN). At 248–259 (SGDPWLNGRNSQ) the chain is on the extracellular side. The segment at residues 260 to 282 (TMSYFESIYLVTATMSTVGFGDV) is an intramembrane region (pore-forming). A Selectivity for potassium motif is present at residues 276–279 (TVGF). Over 283 to 290 (VAKTSLGR) the chain is Extracellular. A helical membrane pass occupies residues 291–311 (IFIVFFTLGSLILFANYIPEM). The Cytoplasmic segment spans residues 312-1121 (VELFSTRKKY…LDASDIVQEK (810 aa)). RCK N-terminal domains are found at residues 331–473 (KKFI…DNIL) and 718–889 (QNHI…DGML). 2 disordered regions span residues 836–858 (SPTP…KERK) and 1052–1076 (DSSP…GSNF).

The protein belongs to the potassium channel family. Calcium-activated (TC 1.A.1.3) subfamily. KCa5.1/KCNU1 sub-subfamily. In terms of assembly, homotetramer; which constitutes the calcium-activated potassium channel. Interact with LRRC52; this interaction changes some channel gating properties, such as shifting gating to more negative potentials at a given pH. As to expression, testis-specific. Mainly expressed in spermatocytes. Expressed in testis, brain, eye and kidney.

It is found in the cell membrane. The protein resides in the cytoplasm. The enzyme catalyses K(+)(in) = K(+)(out). Its activity is regulated as follows. Regulated by changes in cytosolic pH; activated by alkalization. In contrast to human KCNU1 is not activated by Ca(2+) or Mg(2+). The auxiliary subunit LRRC52 shifts the activation of KCNU1 to more negative potentials at a given pH. Functionally, testis-specific potassium channel activated by both intracellular pH and membrane voltage that mediates export of K(+). Represents the primary spermatozoan K(+) current. The channel underlies a pH-triggered membrane hyperpolarization during the process of sperm capacitation, as sperm encounter the alkaline environment near the ovum in the female reproductive tract, thereby playing an essential for male fertility. This chain is Potassium channel subfamily U member 1 (Kcnu1), found in Mus musculus (Mouse).